A 534-amino-acid chain; its full sequence is Calcium uptake protein 1 homolog, mitochondrial (534 aa).

Residues 1–32 (MLHCSFLRVIPIKNASKRLIIVRSLTSAPAKT) constitute a mitochondrion transit peptide. Residues 131 to 150 (PEASQKEEVTESNGEVEEVK) form a disordered region. 3 consecutive EF-hand domains span residues 271–306 (TSHA…IMSQ), 338–359 (KDGK…LQHD), and 466–501 (LSDH…RMRR). Ca(2+) is bound by residues D284, D286, N288, and E295.

The protein belongs to the MICU1 family. MICU1 subfamily. In terms of tissue distribution, expressed at low levels in PLM touch receptor neurons, germ cells, epidermis, and muscles.

The protein resides in the mitochondrion intermembrane space. Its subcellular location is the mitochondrion inner membrane. In terms of biological role, calcium sensor of the mitochondrial calcium uniporter (mcu-1) channel, which senses calcium level via its EF-hand domains. At low calcium levels, micu-1 occludes the pore of the mcu-1 channel, preventing mitochondrial calcium uptake. At higher calcium levels, calcium-binding to micu-1 induces a conformational change that weakens mcu-1-micu-1 interactions and moves micu-1 away from the pore, allowing calcium permeation through the mcu-1 channel. Also required to protect against manganese toxicity by preventing manganese uptake by mcu-1. Modulates the activity of the mitochondrial calcium uniporter protein mcu-1 depending on the level of intracellular calcium in PLM touch receptor neurons following axonal injury. This Caenorhabditis elegans protein is Calcium uptake protein 1 homolog, mitochondrial.